Here is a 204-residue protein sequence, read N- to C-terminus: dITP/XTP pyrophosphatase (204 aa).

14–19 (THNKGK) contacts substrate. Mg(2+) is bound by residues glutamate 46 and aspartate 75. The active-site Proton acceptor is aspartate 75. Residues serine 76, 161 to 164 (FGYD), lysine 184, and 189 to 190 (HR) contribute to the substrate site.

This sequence belongs to the HAM1 NTPase family. In terms of assembly, homodimer. The cofactor is Mg(2+).

It catalyses the reaction XTP + H2O = XMP + diphosphate + H(+). The enzyme catalyses dITP + H2O = dIMP + diphosphate + H(+). The catalysed reaction is ITP + H2O = IMP + diphosphate + H(+). In terms of biological role, pyrophosphatase that catalyzes the hydrolysis of nucleoside triphosphates to their monophosphate derivatives, with a high preference for the non-canonical purine nucleotides XTP (xanthosine triphosphate), dITP (deoxyinosine triphosphate) and ITP. Seems to function as a house-cleaning enzyme that removes non-canonical purine nucleotides from the nucleotide pool, thus preventing their incorporation into DNA/RNA and avoiding chromosomal lesions. This Ruegeria pomeroyi (strain ATCC 700808 / DSM 15171 / DSS-3) (Silicibacter pomeroyi) protein is dITP/XTP pyrophosphatase.